The chain runs to 62 residues: Photosystem II reaction center protein Z (62 aa).

Transmembrane regions (helical) follow at residues 8–28 (AVFALISTSLILLIGVPVVFA) and 41–61 (FSGTSLWIGLVFLVGILNSLI).

It belongs to the PsbZ family. PSII is composed of 1 copy each of membrane proteins PsbA, PsbB, PsbC, PsbD, PsbE, PsbF, PsbH, PsbI, PsbJ, PsbK, PsbL, PsbM, PsbT, PsbY, PsbZ, Psb30/Ycf12, at least 3 peripheral proteins of the oxygen-evolving complex and a large number of cofactors. It forms dimeric complexes.

It is found in the plastid. It localises to the chloroplast thylakoid membrane. May control the interaction of photosystem II (PSII) cores with the light-harvesting antenna, regulates electron flow through the 2 photosystem reaction centers. PSII is a light-driven water plastoquinone oxidoreductase, using light energy to abstract electrons from H(2)O, generating a proton gradient subsequently used for ATP formation. This chain is Photosystem II reaction center protein Z, found in Pelargonium hortorum (Common geranium).